We begin with the raw amino-acid sequence, 344 residues long: Putative replication factor C small subunit L499 (344 aa).

57-64 contacts ATP; the sequence is GPSGSGKT.

The protein belongs to the activator 1 small subunits family. RfcS subfamily.

Part of the RFC clamp loader complex which loads the PCNA sliding clamp onto DNA. This Acanthamoeba polyphaga mimivirus (APMV) protein is Putative replication factor C small subunit L499.